The chain runs to 330 residues: BTB/POZ domain-containing adapter for CUL3-mediated RhoA degradation protein 1 (330 aa).

The segment at 1–34 is disordered; the sequence is MSAEASGSSGGHAVTVSGSSPSSSSHVGEEKPGR. Residues 40–108 enclose the BTB domain; sequence KYVKLNVGGT…LRDGTVPLPD (69 aa). Positions 282–291 are enriched in low complexity; the sequence is GGVSSSGAGQ. Residues 282–304 form a disordered region; sequence GGVSSSGAGQSEEEGAGAGGGDR.

This sequence belongs to the BACURD family.

The protein localises to the nucleus. Functionally, substrate-specific adapter of a BCR (BTB-CUL3-RBX1) E3 ubiquitin-protein ligase complex required for synaptic transmission. The BCR(KCTD13) E3 ubiquitin ligase complex mediates the ubiquitination of RHOA, leading to its degradation by the proteasome, thereby regulating the actin cytoskeleton and promoting synaptic transmission. The protein is BTB/POZ domain-containing adapter for CUL3-mediated RhoA degradation protein 1 of Danio rerio (Zebrafish).